We begin with the raw amino-acid sequence, 288 residues long: 33 kDa chaperonin (288 aa).

2 disulfides stabilise this stretch: C225-C227 and C258-C261.

This sequence belongs to the HSP33 family. Under oxidizing conditions two disulfide bonds are formed involving the reactive cysteines. Under reducing conditions zinc is bound to the reactive cysteines and the protein is inactive.

It localises to the cytoplasm. In terms of biological role, redox regulated molecular chaperone. Protects both thermally unfolding and oxidatively damaged proteins from irreversible aggregation. Plays an important role in the bacterial defense system toward oxidative stress. In Shewanella denitrificans (strain OS217 / ATCC BAA-1090 / DSM 15013), this protein is 33 kDa chaperonin.